A 612-amino-acid chain; its full sequence is Phosphoenolpyruvate carboxykinase [GTP] (612 aa).

Substrate is bound by residues arginine 82 and 221 to 223 (YGG). 2 residues coordinate Mn(2+): lysine 230 and histidine 250. Serine 272 contacts substrate. Position 273 to 278 (273 to 278 (ACGKTN)) interacts with GTP. Residue cysteine 274 is part of the active site. Aspartate 297 provides a ligand contact to Mn(2+). 388–390 (NSR) contributes to the substrate binding site. GTP-binding positions include arginine 390, arginine 421, and 516 to 519 (FGEN).

It belongs to the phosphoenolpyruvate carboxykinase [GTP] family. Monomer. Mn(2+) serves as cofactor.

The protein localises to the cytoplasm. It catalyses the reaction oxaloacetate + GTP = phosphoenolpyruvate + GDP + CO2. It participates in carbohydrate biosynthesis; gluconeogenesis. Catalyzes the conversion of oxaloacetate (OAA) to phosphoenolpyruvate (PEP), the rate-limiting step in the metabolic pathway that produces glucose from lactate and other precursors derived from the citric acid cycle. This is Phosphoenolpyruvate carboxykinase [GTP] from Corynebacterium efficiens (strain DSM 44549 / YS-314 / AJ 12310 / JCM 11189 / NBRC 100395).